The chain runs to 1051 residues: Carbamoyl phosphate synthase large chain (1051 aa).

The segment at 1 to 399 is carboxyphosphate synthetic domain; sequence MRETPKKVLV…SLQKAIRMLD (399 aa). Residues Arg-127, Arg-167, Gly-173, Gly-174, Lys-206, Leu-208, Glu-213, Gly-239, Val-240, His-241, Gln-282, and Glu-296 each coordinate ATP. The ATP-grasp 1 domain occupies 131–325; it reads RETMIENNLP…LAYVSAKLAL (195 aa). Gln-282, Glu-296, and Asn-298 together coordinate Mg(2+). Mn(2+)-binding residues include Gln-282, Glu-296, and Asn-298. The interval 400 to 548 is oligomerization domain; that stretch reads IGEPGVVGGK…LTYNGTEDDI (149 aa). A carbamoyl phosphate synthetic domain region spans residues 549–930; sequence EFSQGNKLLI…LKSWLSSMPN (382 aa). The ATP-grasp 2 domain occupies 673 to 863; it reads SKLLDKLGIS…LINESMKAIF (191 aa). Positions 709, 748, 750, 755, 779, 780, 781, 782, 822, and 834 each coordinate ATP. Mg(2+) contacts are provided by Gln-822, Glu-834, and Asn-836. The Mn(2+) site is built by Gln-822, Glu-834, and Asn-836. The region spanning 930–1051 is the MGS-like domain; that stretch reads NRIPNKNGIA…FEISEYGGGI (122 aa). The interval 931 to 1051 is allosteric domain; sequence RIPNKNGIAL…FEISEYGGGI (121 aa).

This sequence belongs to the CarB family. In terms of assembly, composed of two chains; the small (or glutamine) chain promotes the hydrolysis of glutamine to ammonia, which is used by the large (or ammonia) chain to synthesize carbamoyl phosphate. Tetramer of heterodimers (alpha,beta)4. Mg(2+) serves as cofactor. The cofactor is Mn(2+).

It carries out the reaction hydrogencarbonate + L-glutamine + 2 ATP + H2O = carbamoyl phosphate + L-glutamate + 2 ADP + phosphate + 2 H(+). It catalyses the reaction hydrogencarbonate + NH4(+) + 2 ATP = carbamoyl phosphate + 2 ADP + phosphate + 2 H(+). Its pathway is amino-acid biosynthesis; L-arginine biosynthesis; carbamoyl phosphate from bicarbonate: step 1/1. It participates in pyrimidine metabolism; UMP biosynthesis via de novo pathway; (S)-dihydroorotate from bicarbonate: step 1/3. Large subunit of the glutamine-dependent carbamoyl phosphate synthetase (CPSase). CPSase catalyzes the formation of carbamoyl phosphate from the ammonia moiety of glutamine, carbonate, and phosphate donated by ATP, constituting the first step of 2 biosynthetic pathways, one leading to arginine and/or urea and the other to pyrimidine nucleotides. The large subunit (synthetase) binds the substrates ammonia (free or transferred from glutamine from the small subunit), hydrogencarbonate and ATP and carries out an ATP-coupled ligase reaction, activating hydrogencarbonate by forming carboxy phosphate which reacts with ammonia to form carbamoyl phosphate. This is Carbamoyl phosphate synthase large chain from Saccharolobus solfataricus (strain ATCC 35092 / DSM 1617 / JCM 11322 / P2) (Sulfolobus solfataricus).